Consider the following 205-residue polypeptide: Putative C-type lectin protein FPV001/FPV260 (205 aa).

Residues 84-187 enclose the C-type lectin domain; the sequence is CPRDWISHNG…CSVRRYLVCK (104 aa).

In Fowlpox virus (strain NVSL) (FPV), this protein is Putative C-type lectin protein FPV001/FPV260.